The following is a 174-amino-acid chain: Gamma-crystallin C (174 aa).

Beta/gamma crystallin 'Greek key' domains follow at residues 2–40 (GKIT…RVDS) and 41–83 (GCWM…RLIP). Residue cysteine 23 is modified to S-methylcysteine. Residues 84 to 87 (HAGS) form a connecting peptide region. 2 consecutive Beta/gamma crystallin 'Greek key' domains span residues 88 to 128 (HRMR…QVLE) and 129 to 171 (GCWV…RRVV).

Belongs to the beta/gamma-crystallin family.

Crystallins are the dominant structural components of the vertebrate eye lens. The polypeptide is Gamma-crystallin C (Crygc) (Mus musculus (Mouse)).